The primary structure comprises 742 residues: MTTIKTSNLGFPRLGRKREWKKAIESYWAKKISKEELDQTLTDLHKENLLLQKYYHLDSIPVGDFSLYDHILDTSLLFNIIPERFQGRTIDDDLLFDIARGNKDHVASALIKWFNTNYHYIVPEWDNVEPKVSRNVLLDRFKYAQSLNVNAHPVIVGPITFVKLSKGGHQTFEEKVKTLLPLYKEVFESLIDAGAEYIQVDEPILVTDDSESYENITREAYDYFEKAGVAKKLVIQTYFERAHLKFLSSLPVGGIGLDFVHDNGYNLKQIEAGDFDKSKTLYAGIIDGRNVWASDIEAKKVLIDKLLAHTNELVIQPSSSLLHVPVSLDDETLDTSVGEGLSFATEKLDELDALRRLFNQNDSVKYDKLKARYERFQNQSFKNLDYDFESVRTSRQSPFAQRIEQQQKRLNLPDLPTTTIGSFPQSREVRKYRADWKNKRITDEAYETFLKNEIARWIKIQEDIGLDVLVHGEFERNDMVEFFGEKLQGFLVTKFGWVQSYGSRAVKPPIIYGDVKWTAPLTVDETVYAQSLTDKPVKGMLTGPVTILNWSFERVDLPRKVVQDQIALAINEEVLALEAAGIKVIQVDEPALREGLPLRSEYHEQYLKDAVLSFKLATSSVRDETQIHTHMCYSQFGQIIHAIHDLDADVISIETSRSHGDLIKDFEDINYDLGIGLGVYDIHSPRIPTKEEITTAINRSLQQIDRSLFWVNPDCGLKTRKEEEVKDALTVLVNAVKAKRQE.

5-methyltetrahydropteroyltri-L-glutamate is bound by residues 18-21 (REWK) and lysine 112. L-homocysteine-binding positions include 420-422 (IGS) and glutamate 473. L-methionine-binding positions include 420–422 (IGS) and glutamate 473. Tryptophan 550 provides a ligand contact to 5-methyltetrahydropteroyltri-L-glutamate. Aspartate 588 contacts L-homocysteine. Aspartate 588 contributes to the L-methionine binding site. Glutamate 594 lines the 5-methyltetrahydropteroyltri-L-glutamate pocket. Residues histidine 630, cysteine 632, and glutamate 654 each coordinate Zn(2+). Histidine 683 acts as the Proton donor in catalysis. Residue cysteine 715 participates in Zn(2+) binding.

It belongs to the vitamin-B12 independent methionine synthase family. Zn(2+) is required as a cofactor.

The enzyme catalyses 5-methyltetrahydropteroyltri-L-glutamate + L-homocysteine = tetrahydropteroyltri-L-glutamate + L-methionine. Its pathway is amino-acid biosynthesis; L-methionine biosynthesis via de novo pathway; L-methionine from L-homocysteine (MetE route): step 1/1. Catalyzes the transfer of a methyl group from 5-methyltetrahydrofolate to homocysteine resulting in methionine formation. The sequence is that of 5-methyltetrahydropteroyltriglutamate--homocysteine methyltransferase from Staphylococcus aureus (strain USA300).